Here is a 254-residue protein sequence, read N- to C-terminus: 30 kDa major early protein (254 aa).

The polypeptide is 30 kDa major early protein (Human cytomegalovirus (strain Eisenhardt) (HHV-5)).